The sequence spans 192 residues: GTP cyclohydrolase-2 (192 aa).

50–54 contributes to the GTP binding site; the sequence is RLHSE. Residues Cys-55, Cys-66, and Cys-68 each coordinate Zn(2+). Residues 92–94 and Thr-114 contribute to the GTP site; that span reads EGR. Residue Asp-126 is the Proton acceptor of the active site. The active-site Nucleophile is Arg-128. Positions 149 and 154 each coordinate GTP.

The protein belongs to the GTP cyclohydrolase II family. It depends on Zn(2+) as a cofactor.

It carries out the reaction GTP + 4 H2O = 2,5-diamino-6-hydroxy-4-(5-phosphoribosylamino)-pyrimidine + formate + 2 phosphate + 3 H(+). It participates in cofactor biosynthesis; riboflavin biosynthesis; 5-amino-6-(D-ribitylamino)uracil from GTP: step 1/4. In terms of biological role, catalyzes the conversion of GTP to 2,5-diamino-6-ribosylamino-4(3H)-pyrimidinone 5'-phosphate (DARP), formate and pyrophosphate. This chain is GTP cyclohydrolase-2, found in Helicobacter acinonychis (strain Sheeba).